The chain runs to 147 residues: Large ribosomal subunit protein uL13 (147 aa).

It belongs to the universal ribosomal protein uL13 family. Part of the 50S ribosomal subunit.

In terms of biological role, this protein is one of the early assembly proteins of the 50S ribosomal subunit, although it is not seen to bind rRNA by itself. It is important during the early stages of 50S assembly. In Mycolicibacterium smegmatis (strain ATCC 700084 / mc(2)155) (Mycobacterium smegmatis), this protein is Large ribosomal subunit protein uL13.